Here is a 367-residue protein sequence, read N- to C-terminus: Probable outer membrane usher protein LpfC (367 aa).

An N-terminal signal peptide occupies residues 1-30 (MSRKTVSRTFSSFSISVVAVAVASTFSAHA).

This sequence belongs to the fimbrial export usher family.

The protein localises to the cell outer membrane. In terms of biological role, part of the lpfABCC'DE fimbrial operon. LP fimbriae may participate in the interaction with eukaryotic cells by assisting in microcolony formation. Could be involved in the export and assembly of the fimbrial subunits across the outer membrane. This chain is Probable outer membrane usher protein LpfC (lpfC), found in Escherichia coli O157:H7.